The following is a 96-amino-acid chain: Small ribosomal subunit protein bS6 (96 aa).

Belongs to the bacterial ribosomal protein bS6 family.

Functionally, binds together with bS18 to 16S ribosomal RNA. This is Small ribosomal subunit protein bS6 from Nocardioides sp. (strain ATCC BAA-499 / JS614).